Here is a 343-residue protein sequence, read N- to C-terminus: MASALTVKDPTVSERTVVVSGLPVGLSKDQLVKRYFRDEGGHVEKVIYPPRSKGVAYIIFKEKKVAQTIIRQKKHSLGSEPLLTVSHFSEKVFNYVMAILDLSVFRPQIVLESLVVDLKKKIPTLNFSPLGRSGKISVQGSFLAILKLKQALISKAISALENNRKYAGERRNWTGQNPRRVLQKNENSAPTLGTSVPEPAGSPETLVLDTDVFLYLKHKCQFYEPTLSKYHVLCQERVDGDITTLCLQDARDGSYPGSVRHVKELIEEWAQEFYLELRKELLVLEGRRESEKRNMRQAFEQLCCRYPRVLMNVHRTHIDLIGPPSDTSLFKTQLMKSAGQKVT.

The RRM domain occupies 15-90; the sequence is RTVVVSGLPV…PLLTVSHFSE (76 aa). The disordered stretch occupies residues 170-200; that stretch reads RRNWTGQNPRRVLQKNENSAPTLGTSVPEPA. The segment covering 184–194 has biased composition (polar residues); that stretch reads KNENSAPTLGT.

The sequence is that of RNA-binding protein 43 (Rbm43) from Rattus norvegicus (Rat).